Here is a 31-residue protein sequence, read N- to C-terminus: Cytochrome b6-f complex subunit 6 (31 aa).

A helical membrane pass occupies residues 4–24 (ITSFFGFLLAALTITSVLFIG).

The protein belongs to the PetL family. In terms of assembly, the 4 large subunits of the cytochrome b6-f complex are cytochrome b6, subunit IV (17 kDa polypeptide, PetD), cytochrome f and the Rieske protein, while the 4 small subunits are PetG, PetL, PetM and PetN. The complex functions as a dimer.

Its subcellular location is the plastid. The protein localises to the chloroplast thylakoid membrane. Functionally, component of the cytochrome b6-f complex, which mediates electron transfer between photosystem II (PSII) and photosystem I (PSI), cyclic electron flow around PSI, and state transitions. PetL is important for photoautotrophic growth as well as for electron transfer efficiency and stability of the cytochrome b6-f complex. This chain is Cytochrome b6-f complex subunit 6, found in Oenothera elata subsp. hookeri (Hooker's evening primrose).